The primary structure comprises 251 residues: Large ribosomal subunit protein uL3 (251 aa).

Glutamine 151 bears the N5-methylglutamine mark. Positions 219 to 251 (PGAFRRNGEEAAAAPAAEAPAETPAEEAGQEGA) are disordered. Residues 228-241 (EAAAAPAAEAPAET) are compositionally biased toward low complexity. Over residues 242 to 251 (PAEEAGQEGA) the composition is skewed to acidic residues.

Belongs to the universal ribosomal protein uL3 family. As to quaternary structure, part of the 50S ribosomal subunit. Forms a cluster with proteins L14 and L19. Post-translationally, methylated by PrmB.

Its function is as follows. One of the primary rRNA binding proteins, it binds directly near the 3'-end of the 23S rRNA, where it nucleates assembly of the 50S subunit. This Parvibaculum lavamentivorans (strain DS-1 / DSM 13023 / NCIMB 13966) protein is Large ribosomal subunit protein uL3.